The chain runs to 291 residues: Halorhodopsin (291 aa).

The Extracellular portion of the chain corresponds to 1–30 (MTETLPPVTESAVALQAEVTQRELFEFVLN). A helical transmembrane segment spans residues 31–56 (DPLLASSLYINIALAGLSILLFVFMT). Topologically, residues 57 to 62 (RGLDDP) are cytoplasmic. The helical transmembrane segment at 63-86 (RAKLIAVSTILVPVVSIASYTGLA) threads the bilayer. The Extracellular portion of the chain corresponds to 87–120 (SGLTISVLEMPAGHFAEGSSVMLGGEEVDGVVTM). The chain crosses the membrane as a helical span at residues 121-142 (WGRYLTWALSTPMILLALGLLA). At 143 to 145 (GSN) the chain is on the cytoplasmic side. Residues 146–169 (ATKLFTAITFDIAMCVTGLAAALT) traverse the membrane as a helical segment. At 170–172 (TSS) the chain is on the extracellular side. Residues 173–195 (HLMRWFWYAISCACFLVVLYILL) traverse the membrane as a helical segment. Over 196–207 (VEWAQDAKAAGT) the chain is Cytoplasmic. Residues 208–231 (ADMFNTLKLLTVVMWLGYPIVWAL) form a helical membrane-spanning segment. Residues 232 to 240 (GVEGIAVLP) are Extracellular-facing. A helical membrane pass occupies residues 241–269 (VGVTSWGYSFLDIVAKYIFAFLLLNYLTS). Lys-256 is modified (N6-(retinylidene)lysine). Residues 270–291 (NESVVSGSILDVPSASGTPADD) lie on the Cytoplasmic side of the membrane.

This sequence belongs to the archaeal/bacterial/fungal opsin family.

The protein resides in the cell membrane. Light-driven anion pump. Binding affinity for the anions is in the order, bromide &gt; chloride &gt; nitrate &gt; azide &gt; bromate and binding is pH dependent. The chain is Halorhodopsin (hop) from Natronomonas pharaonis (Natronobacterium pharaonis).